Here is a 125-residue protein sequence, read N- to C-terminus: Photosystem I reaction center subunit IV, chloroplastic (125 aa).

The transit peptide at 1 to 34 (MASIASSVAVRLGLTQVLPNKNFSSPRSTRLVVR) directs the protein to the chloroplast. Over residues 42–57 (APAAASPEGEAPKAAA) the composition is skewed to low complexity. Residues 42–68 (APAAASPEGEAPKAAAKPPPIGPKRGS) form a disordered region.

This sequence belongs to the PsaE family.

It localises to the plastid. The protein localises to the chloroplast thylakoid membrane. In terms of biological role, stabilizes the interaction between PsaC and the PSI core, assists the docking of the ferredoxin to PSI and interacts with ferredoxin-NADP oxidoreductase. The protein is Photosystem I reaction center subunit IV, chloroplastic (PSAE-1) of Spinacia oleracea (Spinach).